Consider the following 240-residue polypeptide: MEKPKYNRIVLKLSGEALAGEQGNGINPTVIQSIAKQVKEIAELDVEVAVVVGGGNLWRGKTGSDLGMDRATADYMGMLATVMNSLALQDSLETLGIQSRVQTSIEMRQVAEPYIRRKAIRHLEKKRVVIFAAGTGNPYFSTDTTAALRAAEIEADVILMAKNNVDGVYNADPRKDESAVKYEKLSYLDVLKDGLEVMDSTASSLCMDNDIPLIVFSIMEEGNIKRAVIGESIGTIVRGK.

12–15 (KLSG) is a binding site for ATP. The segment at 20 to 25 (GEQGNG) is involved in allosteric activation by GTP. Gly-54 provides a ligand contact to UMP. ATP is bound by residues Gly-55 and Arg-59. UMP contacts are provided by residues Asp-74 and 135–142 (TGNPYFST). ATP-binding residues include Asn-163, Tyr-169, and Asp-172.

The protein belongs to the UMP kinase family. In terms of assembly, homohexamer.

It localises to the cytoplasm. The catalysed reaction is UMP + ATP = UDP + ADP. It functions in the pathway pyrimidine metabolism; CTP biosynthesis via de novo pathway; UDP from UMP (UMPK route): step 1/1. With respect to regulation, allosterically activated by GTP. Inhibited by UTP. Functionally, catalyzes the reversible phosphorylation of UMP to UDP. This chain is Uridylate kinase, found in Bacillus velezensis (strain DSM 23117 / BGSC 10A6 / LMG 26770 / FZB42) (Bacillus amyloliquefaciens subsp. plantarum).